Reading from the N-terminus, the 265-residue chain is Palmitoyltransferase ZDHHC21 (265 aa).

Over 1–16 (MGLRIHFVVDPHGWCC) the chain is Cytoplasmic. The helical transmembrane segment at 17 to 37 (MGLIVFVWLYNIVIIPKIVLF) threads the bilayer. Residues 38–44 (PHYEEGH) are Extracellular-facing. Residues 45 to 65 (IPGILIIIFYGISIFCLVALV) traverse the membrane as a helical segment. At 66–133 (RASLTDPGRL…NNCVGEDNHW (68 aa)) the chain is on the cytoplasmic side. A DHHC domain is found at 90 to 140 (ELCNKCNLMRPKRSHHCSRCGHCVRRMDHHCPWINNCVGEDNHWLFLQLCF). Catalysis depends on Cys-120, which acts as the S-palmitoyl cysteine intermediate. Residues 134–154 (LFLQLCFYTELLTCYALMFSF) form a helical membrane-spanning segment. The Extracellular portion of the chain corresponds to 155-185 (CHYYYFLPLKKRNLDLFVVRHELAIMRLAAF). The helical transmembrane segment at 186-206 (MGITMLVGITGLFYTQLIGII) threads the bilayer. The Cytoplasmic segment spans residues 207 to 265 (TDTTSIEKMSNCCEEISRPRKPWQQTFSEVFGTRWKILWFIPFRQRQPLRVPYHFANHV).

It belongs to the DHHC palmitoyltransferase family. Widely expressed. Expressed in Henle's layer within the hair bulb and the hair shaft cuticle (at protein level). Expression is limited to the post-mitotic lineages of inner root sheath (IRS) and cuticle.

The protein localises to the golgi apparatus membrane. The protein resides in the golgi apparatus. It is found in the cis-Golgi network membrane. Its subcellular location is the cell membrane. The enzyme catalyses L-cysteinyl-[protein] + hexadecanoyl-CoA = S-hexadecanoyl-L-cysteinyl-[protein] + CoA. Palmitoyltransferase that catalyzes the addition of palmitate onto various protein substrates. Palmitoylates sex steroid hormone receptors, including ESR1, PGR and AR, thereby regulating their targeting to the plasma membrane. This affects rapid intracellular signaling by sex hormones via ERK and AKT kinases and the generation of cAMP, but does not affect that mediated by their nuclear receptor. Palmitoylates FYN, regulates its localization in hair follicles and plays a key role in epidermal homeostasis and hair follicle differentiation. Through the palmitoylation of PLCB1 and the regulation of PLCB1 downstream signaling may indirectly regulate the function of the endothelial barrier and the adhesion of leukocytes to the endothelium. Also has a palmitoyltransferase activity toward ADRA1D, positively regulating its activity and expression and may thereby play a role in vascular contraction. May also palmitoylate eNOS and LCK. This Mus musculus (Mouse) protein is Palmitoyltransferase ZDHHC21.